The following is a 154-amino-acid chain: Myoglobin (154 aa).

The 147-residue stretch at 2–148 (GLSDDEWHHV…FRNDMASKYK (147 aa)) folds into the Globin domain. Nitrite is bound at residue His-65. Residue His-65 participates in O2 binding. His-94 is a heme b binding site.

This sequence belongs to the globin family. As to quaternary structure, monomeric.

The protein resides in the cytoplasm. Its subcellular location is the sarcoplasm. It catalyses the reaction Fe(III)-heme b-[protein] + nitric oxide + H2O = Fe(II)-heme b-[protein] + nitrite + 2 H(+). The catalysed reaction is H2O2 + AH2 = A + 2 H2O. Its function is as follows. Monomeric heme protein which primary function is to store oxygen and facilitate its diffusion within muscle tissues. Reversibly binds oxygen through a pentacoordinated heme iron and enables its timely and efficient release as needed during periods of heightened demand. Depending on the oxidative conditions of tissues and cells, and in addition to its ability to bind oxygen, it also has a nitrite reductase activity whereby it regulates the production of bioactive nitric oxide. Under stress conditions, like hypoxia and anoxia, it also protects cells against reactive oxygen species thanks to its pseudoperoxidase activity. The protein is Myoglobin (MB) of Graptemys geographica (Common map turtle).